The primary structure comprises 454 residues: Innexin-19 (454 aa).

Residues 1-48 are Cytoplasmic-facing; the sequence is MWRTPASTGPLRQDRQMFFHATLARSFINALSVRGDDDAVDRLNYYYT. Residues 49–69 traverse the membrane as a helical segment; sequence PLILAVCCLVISAKQYGGTPI. Residues 70–118 are Extracellular-facing; sequence ECWVNPHSRESMEEYIESYCWIQNTYWIPMYENVPDDHTAREEKQIGYY. A helical transmembrane segment spans residues 119–139; the sequence is QWVPFILIAEALMFSLPCIFW. Over 140-214 the chain is Cytoplasmic; it reads RLCSFQSGLN…SRFLSGQCLS (75 aa). A helical transmembrane segment spans residues 215-235; sequence ILHSFTKLLYSMNVVAQFLIL. Residues 236–300 are Extracellular-facing; it reads NACLKSSDFL…ALLINIINEK (65 aa). The helical transmembrane segment at 301 to 321 threads the bilayer; sequence VFAFLWCWYMILAIITTCSFI. The Cytoplasmic portion of the chain corresponds to 322-454; the sequence is YWIANSFIHS…SNPGQTKSFL (133 aa).

Belongs to the pannexin family. In terms of tissue distribution, specifically expressed in sensory neurons and interneurons in the head and tail. Expressed in neurons AWC, ASH, AFD, ASI, ADL, ASK, BAG, AWB, and ADF (head sensory neurons); ADA, AIZ, RIC, AIY, and AIM (head interneurons); PHA and PHB (tail sensory neurons); and PVC and PVQ (tail interneurons).

The protein localises to the cell membrane. It is found in the cell junction. Its subcellular location is the gap junction. Its function is as follows. Structural component of the gap junctions that specifically coordinates left-right asymmetry in the developing nervous system. Acts by forming gap junction network linking embryonic neurons and providing electrical coupling between cells, leading to promote or inhibit AWC signaling. Required for the left and right AWC olfactory neurons to establish asymmetric patterns of gene expression during embryogenesis. Acts autonomously. This is Innexin-19 (inx-19) from Caenorhabditis elegans.